We begin with the raw amino-acid sequence, 318 residues long: Death effector domain-containing protein (318 aa).

In terms of domain architecture, DED spans 25 to 103; sequence SLHRMFDIVG…RHDLLPYVTL (79 aa). Disordered regions lie at residues 128-147 and 160-191; these read PRALSDPEPRPPQPSKTVPP and QMCSKRPARGRATLGSQRKRRKSVTPDPKEKQ.

In terms of assembly, interacts with CASP8, CASP10, KRT8, KRT18, CASP3 and FADD. Homodimerizes and heterodimerizes with DEDD2. In terms of processing, exists predominantly in a mono- or diubiquitinated form. As to expression, widely expressed with highest levels in testis.

The protein resides in the cytoplasm. It is found in the nucleus. The protein localises to the nucleolus. Its function is as follows. A scaffold protein that directs CASP3 to certain substrates and facilitates their ordered degradation during apoptosis. May also play a role in mediating CASP3 cleavage of KRT18. Regulates degradation of intermediate filaments during apoptosis. May play a role in the general transcription machinery in the nucleus and might be an important regulator of the activity of GTF3C3. Inhibits DNA transcription in vitro. This chain is Death effector domain-containing protein (DEDD), found in Homo sapiens (Human).